Reading from the N-terminus, the 136-residue chain is Large ribosomal subunit protein uL16 (136 aa).

This sequence belongs to the universal ribosomal protein uL16 family. In terms of assembly, part of the 50S ribosomal subunit.

Its function is as follows. Binds 23S rRNA and is also seen to make contacts with the A and possibly P site tRNAs. In Shigella flexneri, this protein is Large ribosomal subunit protein uL16.